Reading from the N-terminus, the 239-residue chain is 2,3,4,5-tetrahydropyridine-2,6-dicarboxylate N-acetyltransferase (239 aa).

This sequence belongs to the transferase hexapeptide repeat family. DapH subfamily.

The enzyme catalyses (S)-2,3,4,5-tetrahydrodipicolinate + acetyl-CoA + H2O = L-2-acetamido-6-oxoheptanedioate + CoA. It participates in amino-acid biosynthesis; L-lysine biosynthesis via DAP pathway; LL-2,6-diaminopimelate from (S)-tetrahydrodipicolinate (acetylase route): step 1/3. Catalyzes the transfer of an acetyl group from acetyl-CoA to tetrahydrodipicolinate. In Staphylococcus aureus (strain bovine RF122 / ET3-1), this protein is 2,3,4,5-tetrahydropyridine-2,6-dicarboxylate N-acetyltransferase.